A 218-amino-acid polypeptide reads, in one-letter code: Ribonuclease T (218 aa).

Residues 22–196 (VVVDVETAGF…YDAMKTAELF (175 aa)) enclose the Exonuclease domain. Positions 25, 27, 183, and 188 each coordinate Mg(2+). The active-site Proton donor/acceptor is His183.

The protein belongs to the RNase T family. Homodimer. Requires Mg(2+) as cofactor.

Trims short 3' overhangs of a variety of RNA species, leaving a one or two nucleotide 3' overhang. Responsible for the end-turnover of tRNA: specifically removes the terminal AMP residue from uncharged tRNA (tRNA-C-C-A). Also appears to be involved in tRNA biosynthesis. This Hahella chejuensis (strain KCTC 2396) protein is Ribonuclease T.